We begin with the raw amino-acid sequence, 547 residues long: Glucose-6-phosphate isomerase (547 aa).

Glu-353 (proton donor) is an active-site residue. Active-site residues include His-384 and Lys-512.

This sequence belongs to the GPI family.

It localises to the cytoplasm. The enzyme catalyses alpha-D-glucose 6-phosphate = beta-D-fructose 6-phosphate. It functions in the pathway carbohydrate biosynthesis; gluconeogenesis. The protein operates within carbohydrate degradation; glycolysis; D-glyceraldehyde 3-phosphate and glycerone phosphate from D-glucose: step 2/4. Catalyzes the reversible isomerization of glucose-6-phosphate to fructose-6-phosphate. This chain is Glucose-6-phosphate isomerase, found in Pseudoalteromonas atlantica (strain T6c / ATCC BAA-1087).